The sequence spans 110 residues: Large ribosomal subunit protein uL22 (110 aa).

This sequence belongs to the universal ribosomal protein uL22 family. Part of the 50S ribosomal subunit.

Functionally, this protein binds specifically to 23S rRNA; its binding is stimulated by other ribosomal proteins, e.g. L4, L17, and L20. It is important during the early stages of 50S assembly. It makes multiple contacts with different domains of the 23S rRNA in the assembled 50S subunit and ribosome. Its function is as follows. The globular domain of the protein is located near the polypeptide exit tunnel on the outside of the subunit, while an extended beta-hairpin is found that lines the wall of the exit tunnel in the center of the 70S ribosome. The chain is Large ribosomal subunit protein uL22 from Aliarcobacter butzleri (strain RM4018) (Arcobacter butzleri).